Here is a 660-residue protein sequence, read N- to C-terminus: UvrABC system protein B (660 aa).

Positions 26-414 (KKVLAGQRHQ…PEMTEQIIRP (389 aa)) constitute a Helicase ATP-binding domain. 39–46 (GATGTGKT) lines the ATP pocket. The Beta-hairpin motif lies at 92 to 115 (YYDYYQPEAYVPSTDTFIEKDASI). The Helicase C-terminal domain occupies 430 to 596 (QIDNLIEEIR…TIRKEVRDVI (167 aa)). Residues 624-659 (EKVIEQMENEMKQAAKDLDFEKAAELRDVILELKAE) form the UVR domain.

Belongs to the UvrB family. Forms a heterotetramer with UvrA during the search for lesions. Interacts with UvrC in an incision complex.

The protein resides in the cytoplasm. In terms of biological role, the UvrABC repair system catalyzes the recognition and processing of DNA lesions. A damage recognition complex composed of 2 UvrA and 2 UvrB subunits scans DNA for abnormalities. Upon binding of the UvrA(2)B(2) complex to a putative damaged site, the DNA wraps around one UvrB monomer. DNA wrap is dependent on ATP binding by UvrB and probably causes local melting of the DNA helix, facilitating insertion of UvrB beta-hairpin between the DNA strands. Then UvrB probes one DNA strand for the presence of a lesion. If a lesion is found the UvrA subunits dissociate and the UvrB-DNA preincision complex is formed. This complex is subsequently bound by UvrC and the second UvrB is released. If no lesion is found, the DNA wraps around the other UvrB subunit that will check the other stand for damage. This is UvrABC system protein B from Oceanobacillus iheyensis (strain DSM 14371 / CIP 107618 / JCM 11309 / KCTC 3954 / HTE831).